Consider the following 163-residue polypeptide: Lipoprotein signal peptidase (163 aa).

A run of 4 helical transmembrane segments spans residues 9–29 (AWPW…SKYL), 42–62 (ILPF…SFLG), 67–87 (WQII…ILWL), and 93–113 (SEIM…GNFI). Residues Asp-123 and Asp-141 contribute to the active site. A helical membrane pass occupies residues 137–157 (FNVADSAICVGVFLLIVHMLL).

This sequence belongs to the peptidase A8 family.

It is found in the cell inner membrane. It catalyses the reaction Release of signal peptides from bacterial membrane prolipoproteins. Hydrolyzes -Xaa-Yaa-Zaa-|-(S,diacylglyceryl)Cys-, in which Xaa is hydrophobic (preferably Leu), and Yaa (Ala or Ser) and Zaa (Gly or Ala) have small, neutral side chains.. It participates in protein modification; lipoprotein biosynthesis (signal peptide cleavage). In terms of biological role, this protein specifically catalyzes the removal of signal peptides from prolipoproteins. The sequence is that of Lipoprotein signal peptidase from Coxiella burnetii (strain RSA 493 / Nine Mile phase I).